A 200-amino-acid chain; its full sequence is Holliday junction branch migration complex subunit RuvA (200 aa).

The tract at residues 1 to 64 (MFAYFRGKLT…EDLLQLYGFS (64 aa)) is domain I. The domain II stretch occupies residues 65–143 (GEEERQLFRL…KLSPVSALAS (79 aa)). Residues 144 to 154 (PARLSSTLLRD) are flexible linker. The tract at residues 154–200 (DDAVNALVTLGFSRIIVQKAVVAILEQNPGLTVEEVIKAALVSIHNS) is domain III.

Belongs to the RuvA family. As to quaternary structure, homotetramer. Forms an RuvA(8)-RuvB(12)-Holliday junction (HJ) complex. HJ DNA is sandwiched between 2 RuvA tetramers; dsDNA enters through RuvA and exits via RuvB. An RuvB hexamer assembles on each DNA strand where it exits the tetramer. Each RuvB hexamer is contacted by two RuvA subunits (via domain III) on 2 adjacent RuvB subunits; this complex drives branch migration. In the full resolvosome a probable DNA-RuvA(4)-RuvB(12)-RuvC(2) complex forms which resolves the HJ.

It is found in the cytoplasm. In terms of biological role, the RuvA-RuvB-RuvC complex processes Holliday junction (HJ) DNA during genetic recombination and DNA repair, while the RuvA-RuvB complex plays an important role in the rescue of blocked DNA replication forks via replication fork reversal (RFR). RuvA specifically binds to HJ cruciform DNA, conferring on it an open structure. The RuvB hexamer acts as an ATP-dependent pump, pulling dsDNA into and through the RuvAB complex. HJ branch migration allows RuvC to scan DNA until it finds its consensus sequence, where it cleaves and resolves the cruciform DNA. In Pelodictyon phaeoclathratiforme (strain DSM 5477 / BU-1), this protein is Holliday junction branch migration complex subunit RuvA.